Reading from the N-terminus, the 318-residue chain is NADH-ubiquinone oxidoreductase chain 1 (318 aa).

8 helical membrane passes run 2 to 22 (FLVN…FLTL), 70 to 90 (MFIM…TPLP), 100 to 120 (LGVL…LWSG), 140 to 160 (ISYE…SGSF), 172 to 192 (LWLI…TLAE), 217 to 237 (GGSF…MNAI), 253 to 273 (EFYT…FLWI), and 294 to 314 (LPLT…TASI).

Belongs to the complex I subunit 1 family. Core subunit of respiratory chain NADH dehydrogenase (Complex I) which is composed of 45 different subunits.

It localises to the mitochondrion inner membrane. It carries out the reaction a ubiquinone + NADH + 5 H(+)(in) = a ubiquinol + NAD(+) + 4 H(+)(out). Functionally, core subunit of the mitochondrial membrane respiratory chain NADH dehydrogenase (Complex I) which catalyzes electron transfer from NADH through the respiratory chain, using ubiquinone as an electron acceptor. Essential for the catalytic activity and assembly of complex I. The chain is NADH-ubiquinone oxidoreductase chain 1 (MT-ND1) from Emballonura alecto (Philippine sheath-tailed bat).